The following is a 133-amino-acid chain: Profilin-1 (133 aa).

Cysteine 95 and cysteine 117 form a disulfide bridge.

It belongs to the profilin family. In terms of assembly, dimer and tetramer. Occurs in many kinds of cells as a complex with monomeric actin in a 1:1 ratio.

The protein resides in the cytoplasm. It localises to the cytoskeleton. In terms of biological role, binds to actin and affects the structure of the cytoskeleton. At high concentrations, profilin prevents the polymerization of actin, whereas it enhances it at low concentrations. By binding to PIP2, it inhibits the formation of IP3 and DG. Possesses high binding affinity for poly(L-proline). This Artemisia vulgaris (Mugwort) protein is Profilin-1.